The following is a 158-amino-acid chain: C-type lectin BML-1 (158 aa).

Positions 1–23 are cleaved as a signal peptide; sequence MGHFTFTGLCLLAMFLSLRGAEC. 4 disulfides stabilise this stretch: Cys-26–Cys-37, Cys-54–Cys-154, Cys-61–Cys-156, and Cys-129–Cys-146. Residues 33 to 155 enclose the C-type lectin domain; the sequence is KNGLCYKVFS…CAALRPFLCQ (123 aa). Ca(2+)-binding residues include Gln-119, Asp-121, and Glu-127. The Galactose-binding motif lies at 119–121; that stretch reads QPD. A glycan (N-linked (GlcNAc...) asparagine) is linked at Asn-134. Positions 142 and 143 each coordinate Ca(2+).

Belongs to the true venom lectin family. In terms of assembly, homodimer; non-covalently linked. Expressed by the venom gland.

The protein resides in the secreted. In terms of biological role, recombinant C-type lectin BML-1 is able to agglutinate erythrocytes. May be a calcium-dependent lectin. This Bungarus multicinctus (Many-banded krait) protein is C-type lectin BML-1.